The primary structure comprises 290 residues: Ribosomal RNA small subunit methyltransferase A (290 aa).

S-adenosyl-L-methionine is bound by residues asparagine 27, leucine 29, glycine 54, glutamate 75, aspartate 100, and asparagine 125.

Belongs to the class I-like SAM-binding methyltransferase superfamily. rRNA adenine N(6)-methyltransferase family. RsmA subfamily.

It localises to the cytoplasm. The enzyme catalyses adenosine(1518)/adenosine(1519) in 16S rRNA + 4 S-adenosyl-L-methionine = N(6)-dimethyladenosine(1518)/N(6)-dimethyladenosine(1519) in 16S rRNA + 4 S-adenosyl-L-homocysteine + 4 H(+). Functionally, specifically dimethylates two adjacent adenosines (A1518 and A1519) in the loop of a conserved hairpin near the 3'-end of 16S rRNA in the 30S particle. May play a critical role in biogenesis of 30S subunits. This chain is Ribosomal RNA small subunit methyltransferase A, found in Streptococcus thermophilus (strain ATCC BAA-250 / LMG 18311).